A 61-amino-acid chain; its full sequence is Short neurotoxin 1 (61 aa).

Residues 1–16 (MECHNQQSSQPPTTKT) show a composition bias toward polar residues. Positions 1–20 (MECHNQQSSQPPTTKTCPGE) are disordered. Disulfide bonds link Cys3/Cys23, Cys17/Cys40, Cys42/Cys53, and Cys54/Cys59.

This sequence belongs to the three-finger toxin family. Short-chain subfamily. Type I alpha-neurotoxin sub-subfamily. Expressed by the venom gland.

It localises to the secreted. Functionally, binds to muscle nicotinic acetylcholine receptor (nAChR) and inhibit acetylcholine from binding to the receptor, thereby impairing neuromuscular transmission. This Naja melanoleuca (Forest cobra) protein is Short neurotoxin 1.